The sequence spans 125 residues: Small ribosomal subunit protein eS8 (125 aa).

It belongs to the eukaryotic ribosomal protein eS8 family. As to quaternary structure, part of the 30S ribosomal subunit.

The chain is Small ribosomal subunit protein eS8 from Methanocella arvoryzae (strain DSM 22066 / NBRC 105507 / MRE50).